The chain runs to 142 residues: Hemoglobin subunit alpha (142 aa).

The 141-residue stretch at 2–142 folds into the Globin domain; sequence VLSPADKTNV…VSTVLTSKYR (141 aa). Residue S4 is modified to Phosphoserine. K8 is subject to N6-succinyllysine. A Phosphothreonine modification is found at T9. The residue at position 12 (K12) is an N6-succinyllysine. The residue at position 17 (K17) is an N6-acetyllysine; alternate. At K17 the chain carries N6-succinyllysine; alternate. Y25 bears the Phosphotyrosine mark. Residue S36 is modified to Phosphoserine. N6-succinyllysine is present on K41. The residue at position 50 (S50) is a Phosphoserine. An O2-binding site is contributed by H59. Position 88 (H88) interacts with heme b. S103 bears the Phosphoserine mark. Phosphothreonine is present on T109. S125 bears the Phosphoserine mark. A phosphothreonine mark is found at T135 and T138. At S139 the chain carries Phosphoserine.

This sequence belongs to the globin family. In terms of assembly, heterotetramer of two alpha chains and two beta chains. Red blood cells.

Functionally, involved in oxygen transport from the lung to the various peripheral tissues. Its function is as follows. Hemopressin acts as an antagonist peptide of the cannabinoid receptor CNR1. Hemopressin-binding efficiently blocks cannabinoid receptor CNR1 and subsequent signaling. The polypeptide is Hemoglobin subunit alpha (HBA) (Ailuropoda melanoleuca (Giant panda)).